Here is an 871-residue protein sequence, read N- to C-terminus: Coatomer subunit gamma-2 (871 aa).

Over residues 1 to 11 the composition is skewed to basic and acidic residues; it reads MIKKFDKKDEE. The segment at 1-20 is disordered; the sequence is MIKKFDKKDEESGSGSNPFR. 6 HEAT repeats span residues 64–101, 283–320, 321–355, 356–392, 395–430, and 467–504; these read TEAT…ISED, RELA…KHPS, AVTA…GSES, SVDR…KYPR, SVMM…ENPE, and PVPS…QNEN. At threonine 594 the chain carries Phosphothreonine.

This sequence belongs to the COPG family. In terms of assembly, oligomeric complex. Binds to CDC42. Interacts with JAGN1. Interacts with TMED10 (via cytoplasmic domain).

The protein localises to the cytoplasm. It localises to the cytosol. Its subcellular location is the golgi apparatus membrane. It is found in the cytoplasmic vesicle. The protein resides in the COPI-coated vesicle membrane. Functionally, the coatomer is a cytosolic protein complex that binds to dilysine motifs and reversibly associates with Golgi non-clathrin-coated vesicles, which further mediate biosynthetic protein transport from the ER, via the Golgi up to the trans Golgi network. Coatomer complex is required for budding from Golgi membranes, and is essential for the retrograde Golgi-to-ER transport of dilysine-tagged proteins. In mammals, the coatomer can only be recruited by membranes associated to ADP-ribosylation factors (ARFs), which are small GTP-binding proteins; the complex also influences the Golgi structural integrity, as well as the processing, activity, and endocytic recycling of LDL receptors. This is Coatomer subunit gamma-2 (COPG2) from Bos taurus (Bovine).